The primary structure comprises 775 residues: Polyribonucleotide nucleotidyltransferase (775 aa).

The tract at residues 223–247 (DEQVPEKPRKGRRRGRKSSPRKKTD) is disordered. The segment covering 231 to 243 (RKGRRRGRKSSPR) has biased composition (basic residues). Mg(2+) contacts are provided by D567 and D573. One can recognise a KH domain in the interval 633–692 (PRITTISVPVSKIGEVIGPKGKNINQITEDTGARVSIEDDGTVFISATSGGSAEAAVDRI). An S1 motif domain is found at 704–773 (GERFLGTVVK…NRGKISLVPV (70 aa)).

This sequence belongs to the polyribonucleotide nucleotidyltransferase family. Mg(2+) is required as a cofactor.

Its subcellular location is the cytoplasm. It carries out the reaction RNA(n+1) + phosphate = RNA(n) + a ribonucleoside 5'-diphosphate. In terms of biological role, involved in mRNA degradation. Catalyzes the phosphorolysis of single-stranded polyribonucleotides processively in the 3'- to 5'-direction. This is Polyribonucleotide nucleotidyltransferase from Corynebacterium kroppenstedtii (strain DSM 44385 / JCM 11950 / CIP 105744 / CCUG 35717).